A 715-amino-acid polypeptide reads, in one-letter code: MTTTSAFMLNVRLDNVAVVAIDVPGEKVNTLKAEFAAQVRAILKQIRENKALQGVVFISAKADNFIAGADINMIGHCQNAQEAETLARQGQQLMAEIQALPVPVIAAIHGACLGGGLEMALACHRRICTDDVKTVLGLPEVQLGLLPGSGGTQRLPRLVGVSTALDMILTGKQLRARQALKAGLVDDVVPQTILLEAAVELAKKERLAQRTLPVRERILAGPLGRALLFRLVRKKTAQKTQGNYPATERIIDVIETGLAQGSSSGYDAEARAFGELAMTPQSQALRAVFFASTEVKKDPGSDAPPGPLNSVGILGGGLMGGGIAWVTACKGGLPVRIKDINTQGINHALKYSWDLLETKVRRRHIKASERDKQLALISGSTDYRGFSHRDLVIEAVFEDLPLKQQMVAEVEQNCAAHTIFASNTSSLPIGDIAANAARPEQVIGLHFFSPVEKMPLVEVIPHASTSAQTIATTVKLAKKQGKTPIVVSDKAGFYVNRILAPYINEAIRMLTEGERVEHIDAALVKFGFPVGPIQLLDEVGIDTGTKIIPVLEAAYGERFSAPANVVASILNDDRKGRKNGRGFYLYGEKGRKSKKQVDPAIYKLIGVQGQSRLSAQQVAERCVMLMLNEAARCFDEKVIRSARDGDIGAVFGIGFPPFLGGPFRYMDALGPGEMVATLQRLAALYGPRYAPCEQLVRMAERREHFWTNGETDQGN.

Residues 1-190 (MTTTSAFMLN…KAGLVDDVVP (190 aa)) form an enoyl-CoA hydratase region. Residues 306-715 (GPLNSVGILG…WTNGETDQGN (410 aa)) form a 3-hydroxyacyl-CoA dehydrogenase region.

In the N-terminal section; belongs to the enoyl-CoA hydratase/isomerase family. This sequence in the central section; belongs to the 3-hydroxyacyl-CoA dehydrogenase family. As to quaternary structure, heterotetramer of two alpha chains (FadJ) and two beta chains (FadI).

It localises to the cytoplasm. It catalyses the reaction a (3S)-3-hydroxyacyl-CoA = a (2E)-enoyl-CoA + H2O. The catalysed reaction is a 4-saturated-(3S)-3-hydroxyacyl-CoA = a (3E)-enoyl-CoA + H2O. It carries out the reaction a (3S)-3-hydroxyacyl-CoA + NAD(+) = a 3-oxoacyl-CoA + NADH + H(+). The enzyme catalyses (3S)-3-hydroxybutanoyl-CoA = (3R)-3-hydroxybutanoyl-CoA. The protein operates within lipid metabolism; fatty acid beta-oxidation. In terms of biological role, catalyzes the formation of a hydroxyacyl-CoA by addition of water on enoyl-CoA. Also exhibits 3-hydroxyacyl-CoA epimerase and 3-hydroxyacyl-CoA dehydrogenase activities. The chain is Fatty acid oxidation complex subunit alpha from Salmonella agona (strain SL483).